Here is a 596-residue protein sequence, read N- to C-terminus: Phosphoenolpyruvate carboxykinase [GTP] (596 aa).

Residues Arg-77 and 205–207 (YGG) contribute to the substrate site. Residues Lys-214 and His-234 each coordinate Mn(2+). Substrate is bound at residue Ser-256. 257–262 (ACGKTN) provides a ligand contact to GTP. Residue Cys-258 is part of the active site. Asp-283 serves as a coordination point for Mn(2+). The interval 362–388 (KKGSTEKAAHPNSRFTAPAKNNPAISP) is disordered. Position 373–375 (373–375 (NSR)) interacts with substrate. GTP-binding positions include Arg-375, Arg-406, and 499–502 (YGDN).

Belongs to the phosphoenolpyruvate carboxykinase [GTP] family. As to quaternary structure, monomer. Requires Mn(2+) as cofactor.

The protein resides in the cytoplasm. The enzyme catalyses oxaloacetate + GTP = phosphoenolpyruvate + GDP + CO2. The protein operates within carbohydrate biosynthesis; gluconeogenesis. Catalyzes the conversion of oxaloacetate (OAA) to phosphoenolpyruvate (PEP), the rate-limiting step in the metabolic pathway that produces glucose from lactate and other precursors derived from the citric acid cycle. The chain is Phosphoenolpyruvate carboxykinase [GTP] from Anaeromyxobacter dehalogenans (strain 2CP-1 / ATCC BAA-258).